A 499-amino-acid polypeptide reads, in one-letter code: Bifunctional purine biosynthesis protein PurH (499 aa).

The MGS-like domain maps to 1–144; sequence MINRALISVY…KNFKDVIVVT (144 aa).

It belongs to the PurH family.

It carries out the reaction (6R)-10-formyltetrahydrofolate + 5-amino-1-(5-phospho-beta-D-ribosyl)imidazole-4-carboxamide = 5-formamido-1-(5-phospho-D-ribosyl)imidazole-4-carboxamide + (6S)-5,6,7,8-tetrahydrofolate. The enzyme catalyses IMP + H2O = 5-formamido-1-(5-phospho-D-ribosyl)imidazole-4-carboxamide. It participates in purine metabolism; IMP biosynthesis via de novo pathway; 5-formamido-1-(5-phospho-D-ribosyl)imidazole-4-carboxamide from 5-amino-1-(5-phospho-D-ribosyl)imidazole-4-carboxamide (10-formyl THF route): step 1/1. It functions in the pathway purine metabolism; IMP biosynthesis via de novo pathway; IMP from 5-formamido-1-(5-phospho-D-ribosyl)imidazole-4-carboxamide: step 1/1. The sequence is that of Bifunctional purine biosynthesis protein PurH from Clostridium kluyveri (strain NBRC 12016).